The primary structure comprises 212 residues: UPF0502 protein ECA2523 (212 aa).

The protein belongs to the UPF0502 family.

In Pectobacterium atrosepticum (strain SCRI 1043 / ATCC BAA-672) (Erwinia carotovora subsp. atroseptica), this protein is UPF0502 protein ECA2523.